A 209-amino-acid polypeptide reads, in one-letter code: Thymidylate kinase (209 aa).

13–20 contacts ATP; that stretch reads GLEGAGKS.

This sequence belongs to the thymidylate kinase family.

The catalysed reaction is dTMP + ATP = dTDP + ADP. In terms of biological role, phosphorylation of dTMP to form dTDP in both de novo and salvage pathways of dTTP synthesis. In Shewanella sp. (strain MR-4), this protein is Thymidylate kinase.